The primary structure comprises 389 residues: Chalcone synthase 4 (389 aa).

C164 is an active-site residue.

The protein belongs to the thiolase-like superfamily. Chalcone/stilbene synthases family.

It catalyses the reaction (E)-4-coumaroyl-CoA + 3 malonyl-CoA + 3 H(+) = 2',4,4',6'-tetrahydroxychalcone + 3 CO2 + 4 CoA. The protein operates within secondary metabolite biosynthesis; flavonoid biosynthesis. Its function is as follows. The primary product of this enzyme is 4,2',4',6'-tetrahydroxychalcone (also termed naringenin-chalcone or chalcone) which can under specific conditions spontaneously isomerize into naringenin. In Medicago sativa (Alfalfa), this protein is Chalcone synthase 4 (CHS4).